The sequence spans 59 residues: DNA-directed RNA polymerase subunit Rpo6 (59 aa).

This sequence belongs to the archaeal Rpo6/eukaryotic RPB6 RNA polymerase subunit family. Part of the RNA polymerase complex.

It is found in the cytoplasm. The enzyme catalyses RNA(n) + a ribonucleoside 5'-triphosphate = RNA(n+1) + diphosphate. Functionally, DNA-dependent RNA polymerase (RNAP) catalyzes the transcription of DNA into RNA using the four ribonucleoside triphosphates as substrates. This Halorubrum lacusprofundi (strain ATCC 49239 / DSM 5036 / JCM 8891 / ACAM 34) protein is DNA-directed RNA polymerase subunit Rpo6.